The following is a 123-amino-acid chain: Galectin-2 (123 aa).

Residues 4 to 123 enclose the Galectin domain; sequence KVEIMNMDMK…LRYLSVQGGF (120 aa). A beta-D-galactoside is bound at residue 65 to 71; it reads WGKEQRD.

Homodimer.

Its function is as follows. This protein binds beta-galactoside. Its physiological function is not yet known. In Sus scrofa (Pig), this protein is Galectin-2 (LGALS2).